A 54-amino-acid polypeptide reads, in one-letter code: Large ribosomal subunit protein bL33 (54 aa).

This sequence belongs to the bacterial ribosomal protein bL33 family.

In Stenotrophomonas maltophilia (strain K279a), this protein is Large ribosomal subunit protein bL33.